Consider the following 318-residue polypeptide: Putative S-adenosyl-L-methionine-dependent methyltransferase BCG_0781c (318 aa).

Residues D135 and 164-165 (DL) each bind S-adenosyl-L-methionine.

Belongs to the UPF0677 family.

In terms of biological role, exhibits S-adenosyl-L-methionine-dependent methyltransferase activity. The protein is Putative S-adenosyl-L-methionine-dependent methyltransferase BCG_0781c of Mycobacterium bovis (strain BCG / Pasteur 1173P2).